The following is an 880-amino-acid chain: Translation initiation factor IF-2 (880 aa).

The segment covering 143–228 has biased composition (basic and acidic residues); it reads EAEAKAKAKA…EAERNGDHHI (86 aa). The tract at residues 143 to 289 is disordered; sequence EAEAKAKAKA…APESMAHGFN (147 aa). The span at 249 to 262 shows a compositional bias: basic residues; that stretch reads GRRARNKSNAKKRG. The tr-type G domain maps to 380–549; sequence SRAPVVTIMG…LLQAEVLELK (170 aa). Residues 389–396 form a G1 region; the sequence is GHVDHGKT. 389–396 contacts GTP; it reads GHVDHGKT. Residues 414–418 are G2; the sequence is GITQH. The interval 435–438 is G3; that stretch reads DTPG. Residues 435 to 439 and 489 to 492 contribute to the GTP site; these read DTPGH and NKMD. Residues 489–492 form a G4 region; the sequence is NKMD. Residues 525–527 are G5; it reads SAK.

The protein belongs to the TRAFAC class translation factor GTPase superfamily. Classic translation factor GTPase family. IF-2 subfamily.

Its subcellular location is the cytoplasm. Its function is as follows. One of the essential components for the initiation of protein synthesis. Protects formylmethionyl-tRNA from spontaneous hydrolysis and promotes its binding to the 30S ribosomal subunits. Also involved in the hydrolysis of GTP during the formation of the 70S ribosomal complex. This chain is Translation initiation factor IF-2, found in Shewanella putrefaciens (strain CN-32 / ATCC BAA-453).